The sequence spans 330 residues: Ribosomal RNA small subunit methyltransferase H (330 aa).

S-adenosyl-L-methionine is bound by residues 48 to 50 (GGH), Asp67, Leu101, Asp115, and Gln122.

Belongs to the methyltransferase superfamily. RsmH family.

It localises to the cytoplasm. It catalyses the reaction cytidine(1402) in 16S rRNA + S-adenosyl-L-methionine = N(4)-methylcytidine(1402) in 16S rRNA + S-adenosyl-L-homocysteine + H(+). In terms of biological role, specifically methylates the N4 position of cytidine in position 1402 (C1402) of 16S rRNA. The chain is Ribosomal RNA small subunit methyltransferase H from Pseudarthrobacter chlorophenolicus (strain ATCC 700700 / DSM 12829 / CIP 107037 / JCM 12360 / KCTC 9906 / NCIMB 13794 / A6) (Arthrobacter chlorophenolicus).